A 1079-amino-acid chain; its full sequence is Carbamoyl phosphate synthase large chain (1079 aa).

The tract at residues 2-403 (PKSTDIKSIL…SIQKAIRGLE (402 aa)) is carboxyphosphate synthetic domain. ATP contacts are provided by arginine 129, arginine 169, glycine 175, glycine 176, glutamate 208, leucine 210, glutamate 215, glycine 241, isoleucine 242, histidine 243, glutamine 285, and glutamate 299. The 196-residue stretch at 133–328 (EHSMKKLNLE…IAKIAAKLAI (196 aa)) folds into the ATP-grasp 1 domain. 3 residues coordinate Mg(2+): glutamine 285, glutamate 299, and asparagine 301. Positions 285, 299, and 301 each coordinate Mn(2+). The tract at residues 404 to 553 (VGASGFDSKI…YSTWEDECES (150 aa)) is oligomerization domain. The interval 554 to 936 (HPSKNNKKII…AFSKSMLGAH (383 aa)) is carbamoyl phosphate synthetic domain. Positions 679–870 (QKTVNKLRLQ…LAKISVRVMC (192 aa)) constitute an ATP-grasp 2 domain. ATP contacts are provided by arginine 715, glutamine 754, leucine 756, glutamate 761, glycine 786, valine 787, histidine 788, serine 789, glutamine 829, and glutamate 841. Mg(2+)-binding residues include glutamine 829, glutamate 841, and asparagine 843. Mn(2+) is bound by residues glutamine 829, glutamate 841, and asparagine 843. Residues 937–1079 (TNMKKSGRVL…KKIQLFYTKK (143 aa)) enclose the MGS-like domain. An allosteric domain region spans residues 937-1079 (TNMKKSGRVL…KKIQLFYTKK (143 aa)).

It belongs to the CarB family. Composed of two chains; the small (or glutamine) chain promotes the hydrolysis of glutamine to ammonia, which is used by the large (or ammonia) chain to synthesize carbamoyl phosphate. Tetramer of heterodimers (alpha,beta)4. Mg(2+) is required as a cofactor. Requires Mn(2+) as cofactor.

It carries out the reaction hydrogencarbonate + L-glutamine + 2 ATP + H2O = carbamoyl phosphate + L-glutamate + 2 ADP + phosphate + 2 H(+). The enzyme catalyses hydrogencarbonate + NH4(+) + 2 ATP = carbamoyl phosphate + 2 ADP + phosphate + 2 H(+). It participates in amino-acid biosynthesis; L-arginine biosynthesis; carbamoyl phosphate from bicarbonate: step 1/1. Its pathway is pyrimidine metabolism; UMP biosynthesis via de novo pathway; (S)-dihydroorotate from bicarbonate: step 1/3. Large subunit of the glutamine-dependent carbamoyl phosphate synthetase (CPSase). CPSase catalyzes the formation of carbamoyl phosphate from the ammonia moiety of glutamine, carbonate, and phosphate donated by ATP, constituting the first step of 2 biosynthetic pathways, one leading to arginine and/or urea and the other to pyrimidine nucleotides. The large subunit (synthetase) binds the substrates ammonia (free or transferred from glutamine from the small subunit), hydrogencarbonate and ATP and carries out an ATP-coupled ligase reaction, activating hydrogencarbonate by forming carboxy phosphate which reacts with ammonia to form carbamoyl phosphate. This Buchnera aphidicola subsp. Acyrthosiphon pisum (strain APS) (Acyrthosiphon pisum symbiotic bacterium) protein is Carbamoyl phosphate synthase large chain.